We begin with the raw amino-acid sequence, 311 residues long: MKVAVLGAAGGIGQALALLLKTQLPSGSDLSLYDIAPVTPGVAVDLSHIPTAVNIKGFSGEDATPALKGADIVLISAGVARKPGMDRSDLFNVNAGIVRNLVEQIARTCPKALIGIITNPVNTTVAIAAEVLKKAGVYDKNKLFGITTLDTIRSNTFVAELKGKQPQDIEVPVIGGHSGVTILPLLSQIPGISFTEQEVIDLTKRIQNAGTEVVEAKAGGGSATLSMGQAAARFGLSLVRALQGESNVVECSYVEGDGKYARFFAQPILLGKDGVAERKDIGKLSAFEQQALENMLDVLHKDIELGEQFVK.

NAD(+) is bound by residues 7 to 13 (GAAGGIG) and aspartate 34. Substrate contacts are provided by arginine 81 and arginine 87. Residues asparagine 94 and 117-119 (ITN) contribute to the NAD(+) site. Substrate is bound by residues asparagine 119 and arginine 153. Histidine 177 serves as the catalytic Proton acceptor. NAD(+) is bound at residue methionine 227.

It belongs to the LDH/MDH superfamily. MDH type 1 family. In terms of assembly, homodimer.

It catalyses the reaction (S)-malate + NAD(+) = oxaloacetate + NADH + H(+). In terms of biological role, catalyzes the reversible oxidation of malate to oxaloacetate. This is Malate dehydrogenase from Yersinia enterocolitica serotype O:8 / biotype 1B (strain NCTC 13174 / 8081).